A 62-amino-acid polypeptide reads, in one-letter code: Cecropin-A (62 aa).

The N-terminal stretch at 1-20 (MNLVKILFCVFACLVFTVTA) is a signal peptide. The propeptide at 21–24 (VPEP) is removed by a dipeptidylpeptidase. Thr-60 carries the threonine amide modification.

It belongs to the cecropin family.

It is found in the secreted. Its function is as follows. Has antibacterial activity. This chain is Cecropin-A, found in Trichoplusia ni (Cabbage looper).